The following is a 34-amino-acid chain: Jingzhaotoxin F7-10.36 (34 aa).

Cystine bridges form between C2/C17, C9/C22, and C16/C29.

It belongs to the neurotoxin 10 (Hwtx-1) family. 50 (Jztz-F7) subfamily. Expressed by the venom gland.

It is found in the secreted. Probable ion channel inhibitor. This is Jingzhaotoxin F7-10.36 from Chilobrachys guangxiensis (Chinese earth tiger tarantula).